A 92-amino-acid polypeptide reads, in one-letter code: N(2)-fixation sustaining protein CowN (92 aa).

This sequence belongs to the CowN family.

Its function is as follows. Is required to sustain N(2)-dependent growth in the presence of low levels of carbon monoxide (CO). Probably acts by protecting the N(2) fixation ability of the nitrogenase complex, which is inactivated in the presence of CO. This is N(2)-fixation sustaining protein CowN from Rhodopseudomonas palustris (strain BisA53).